The sequence spans 264 residues: Rhodanese-like domain-containing protein 4A, chloroplastic (264 aa).

The transit peptide at methionine 1–leucine 60 directs the protein to the chloroplast. Residues phenylalanine 95–leucine 115 form a helical membrane-spanning segment. Residues asparagine 132 to isoleucine 232 enclose the Rhodanese domain.

Its subcellular location is the plastid. It localises to the chloroplast. The protein resides in the membrane. This is Rhodanese-like domain-containing protein 4A, chloroplastic (STR4A) from Arabidopsis thaliana (Mouse-ear cress).